The primary structure comprises 71 residues: MAKWILLIVALLVLSHVPPGSTEFKRCWNGQGACRTFCTRQETFMHLCPDASLCCLSYSFKPSRPSRVGDV.

An N-terminal signal peptide occupies residues 1–22 (MAKWILLIVALLVLSHVPPGST). 3 disulfide bridges follow: cysteine 27/cysteine 54, cysteine 34/cysteine 48, and cysteine 38/cysteine 55.

This sequence belongs to the beta-defensin family.

The protein resides in the secreted. Its function is as follows. Has antibacterial activity. This is Beta-defensin 25 (Defb25) from Mus musculus (Mouse).